The chain runs to 56 residues: Conotoxin Cal6.41a (56 aa).

A signal peptide spans 1–23 (MSGSGAMLLGLLILVAMATSLDT). Intrachain disulfides connect Cys27-Cys41, Cys33-Cys50, and Cys40-Cys54.

In terms of tissue distribution, expressed by the venom duct.

It is found in the secreted. In terms of biological role, probable neurotoxin. This chain is Conotoxin Cal6.41a, found in Californiconus californicus (California cone).